The primary structure comprises 56 residues: Photosystem II reaction center protein K (56 aa).

The propeptide occupies 1-19 (MLNFLLQNTFVLWSNFILC). A helical transmembrane segment spans residues 35–55 (MPVIPVFFFLLAFVWQAAVSF).

This sequence belongs to the PsbK family. As to quaternary structure, PSII is composed of 1 copy each of membrane proteins PsbA, PsbB, PsbC, PsbD, PsbE, PsbF, PsbH, PsbI, PsbJ, PsbK, PsbL, PsbM, PsbT, PsbX, PsbY, PsbZ, Psb30/Ycf12, at least 3 peripheral proteins of the oxygen-evolving complex and a large number of cofactors. It forms dimeric complexes.

It is found in the plastid. Its subcellular location is the chloroplast thylakoid membrane. Functionally, one of the components of the core complex of photosystem II (PSII). PSII is a light-driven water:plastoquinone oxidoreductase that uses light energy to abstract electrons from H(2)O, generating O(2) and a proton gradient subsequently used for ATP formation. It consists of a core antenna complex that captures photons, and an electron transfer chain that converts photonic excitation into a charge separation. The chain is Photosystem II reaction center protein K from Welwitschia mirabilis (Tree tumbo).